The chain runs to 398 residues: Phytoene synthase, chloroplastic (398 aa).

The protein belongs to the phytoene/squalene synthase family. In terms of assembly, monomer.

It localises to the plastid. It is found in the chloroplast. The enzyme catalyses 2 (2E,6E,10E)-geranylgeranyl diphosphate = 15-cis-phytoene + 2 diphosphate. Its pathway is carotenoid biosynthesis; phytoene biosynthesis; all-trans-phytoene from geranylgeranyl diphosphate: step 1/1. In terms of biological role, catalyzes the reaction from prephytoene diphosphate to phytoene. This chain is Phytoene synthase, chloroplastic (PSY), found in Daucus carota (Wild carrot).